The following is a 1305-amino-acid chain: Adenylate cyclase type 9 (1305 aa).

Over 1-110 the chain is Cytoplasmic; sequence MASPVNQQLL…CFPQTQRRFR (110 aa). Residues 46–55 show a composition bias toward low complexity; the sequence is ISSSCSSGES. Positions 46 to 71 are disordered; it reads ISSSCSSGESGVKKTGGSGGARRQKK. The helical transmembrane segment at 111–131 threads the bilayer; that stretch reads YALMYLSVAGLLWSIYFSVHM. Residues 132 to 134 lie on the Extracellular side of the membrane; the sequence is KTK. A helical membrane pass occupies residues 135-155; sequence LVSHLVPTLCFLIVCLGFFFF. The Cytoplasmic portion of the chain corresponds to 156–164; sequence TFTKSYARH. The chain crosses the membrane as a helical span at residues 165-185; sequence CTAISLLVTLLVFTLTLASQF. Residues 186 to 209 lie on the Extracellular side of the membrane; it reads QVLNPGLGSDSLSNLTSFSATGSS. N-linked (GlcNAc...) asparagine glycosylation occurs at asparagine 199. The chain crosses the membrane as a helical span at residues 210 to 229; it reads SCLSQVGSFSICVEVLLLLY. Over 230–235 the chain is Cytoplasmic; sequence TVMHLP. The helical transmembrane segment at 236–253 threads the bilayer; that stretch reads LYLSACLGVAYSILFETF. At 254–274 the chain is on the extracellular side; it reads GYHFRDESCFVLLVGRMAHWE. Residues 275 to 295 form a helical membrane-spanning segment; the sequence is LLSKALLHVCIHAIGVHLFIM. Topologically, residues 296-778 are cytoplasmic; that stretch reads SEVRSRSTFL…VKTFASATFS (483 aa). The disordered stretch occupies residues 343-369; that stretch reads QGDDESENSVKRHSASSPKSRKKKSSI. The segment covering 353–368 has biased composition (basic residues); it reads KRHSASSPKSRKKKSS. The Mg(2+) site is built by aspartate 393, isoleucine 394, and aspartate 437. Residues 393 to 398, 435 to 437, and arginine 481 each bind ATP; these read DIVGFT and LGD. 2 stretches are compositionally biased toward polar residues: residues 607-618 and 670-680; these read SDSHTNCTQPET and ESSTGDTLTNS. The interval 607–680 is disordered; the sequence is SDSHTNCTQP…SSTGDTLTNS (74 aa). Residues 779-799 form a helical membrane-spanning segment; sequence SLQDVLLNYFIFVLLSVACLL. The Extracellular portion of the chain corresponds to 800–810; it reads KPGTNTVSPPT. The chain crosses the membrane as a helical span at residues 811–831; the sequence is LALVLLSVCGLLGFLSLLVSV. Topologically, residues 832 to 859 are cytoplasmic; it reads RMAFYLEDMLLCTRRLLEIISGWVPRHF. A helical membrane pass occupies residues 860–880; sequence IGTVLVCLPAAVIFSYLSSDF. The Extracellular segment spans residues 881 to 883; the sequence is YTD. The helical transmembrane segment at 884–904 threads the bilayer; it reads IHYTMFLCSALLIPMVQYCNF. Topologically, residues 905–911 are cytoplasmic; that stretch reads CQLSSSA. A helical membrane pass occupies residues 912–932; that stretch reads LLLATITGATMLILIYLPLCP. At 933-966 the chain is on the extracellular side; the sequence is QRPPLDPGTDIEANLSTSNSSYETLDNPRTELPF. Asparagine 946 and asparagine 951 each carry an N-linked (GlcNAc...) asparagine glycan. The chain crosses the membrane as a helical span at residues 967–987; it reads TRLGQEIAVAYFLLLLLVWFL. The Cytoplasmic segment spans residues 988–1305; sequence NREFDVSYRL…EERGRDGGAR (318 aa). ATP contacts are provided by residues lysine 1099, 1176–1178, 1183–1187, and lysine 1223; these read DIW and NIASR. Positions 1261–1305 are disordered; sequence SIGRSPTDEISSLVTGGKGAVELGSGEAERKREKAEERGRDGGAR. Positions 1287-1305 are enriched in basic and acidic residues; that stretch reads EAERKREKAEERGRDGGAR.

This sequence belongs to the adenylyl cyclase class-4/guanylyl cyclase family. Mg(2+) serves as cofactor. Mn(2+) is required as a cofactor. As to expression, detected in oocytes.

The protein resides in the cell membrane. The catalysed reaction is ATP = 3',5'-cyclic AMP + diphosphate. Its function is as follows. Adenylyl cyclase that catalyzes the formation of the signaling molecule cAMP in response to activation of G protein-coupled receptors. The protein is Adenylate cyclase type 9 (adcy9) of Xenopus laevis (African clawed frog).